We begin with the raw amino-acid sequence, 89 residues long: Diphthamide biosynthesis protein 3 (89 aa).

In terms of domain architecture, DPH-type MB spans 5 to 61 (FYDEIELEDMSYDDEKDVFHYPCPCGDRFEITRQQLKDAEDVARCPSCSLIIRVVFD). Positions 27, 29, 49, and 52 each coordinate Fe cation.

This sequence belongs to the DPH3 family. As to quaternary structure, component of the 2-(3-amino-3-carboxypropyl)histidine synthase complex composed of DPH1, DPH2, DPH3 and a NADH-dependent reductase, predominantly CBR1. The cofactor is Fe(2+).

The protein resides in the cytoplasm. The protein localises to the nucleus. It carries out the reaction [3Fe-4S](1+)-[protein] + Fe(2+)-[Dph3] = [3Fe-4S](0)-[protein] + Fe(3+)-[Dph3]. It catalyses the reaction 2 [3Fe-4S](0)-[protein] + 2 Fe(2+)-[Dph3] + NADH = 2 [4Fe-4S](1+)-[protein] + 2 [Dph3] + NAD(+) + H(+). The protein operates within protein modification; peptidyl-diphthamide biosynthesis. Functionally, required for the first step of diphthamide biosynthesis, a post-translational modification of histidine which occurs in elongation factor 2. DPH1 and DPH2 transfer a 3-amino-3-carboxypropyl (ACP) group from S-adenosyl-L-methionine (SAM) to a histidine residue, the reaction is assisted by a reduction system comprising KTI11/DPH3 and a NADH-dependent reductase, predominantly CBR1. Acts as an electron donor to reduce the Fe-S cluster in DPH1-DPH2 keeping the [4Fe-4S] clusters in the active and reduced state. Restores iron to DPH1-DPH2 iron-sulfur clusters which have degraded from [4Fe-4S] to [3Fe-4S] by donating an iron atom to reform [4Fe-4S] clusters, in a manner dependent on the presence of elongation factor 2 and SAM. Associates with the elongator complex and is required for tRNA Wobble base modifications mediated by the elongator complex. The elongator complex is required for multiple tRNA modifications, including mcm5U (5-methoxycarbonylmethyl uridine), mcm5s 2U (5-methoxycarbonylmethyl-2-thiouridine), and ncm5U (5-carbamoylmethyl uridine). This is Diphthamide biosynthesis protein 3 (DPH3) from Mycosarcoma maydis (Corn smut fungus).